The chain runs to 252 residues: Small ribosomal subunit protein uS2 (252 aa).

Residues 231 to 252 (SVESTAQEQVEETAQEETAVEA) are disordered. Positions 239–252 (QVEETAQEETAVEA) are enriched in acidic residues.

It belongs to the universal ribosomal protein uS2 family.

The chain is Small ribosomal subunit protein uS2 from Acetivibrio thermocellus (strain ATCC 27405 / DSM 1237 / JCM 9322 / NBRC 103400 / NCIMB 10682 / NRRL B-4536 / VPI 7372) (Clostridium thermocellum).